The sequence spans 219 residues: MTQILIVEDEQNLARFLELELTHENYNVDTEYDGQDGLDKALSHYYDLIILDLMLPSINGLEICRKIRQQQSTPIIIITAKSDTYDKVAGLDYGADDYIVKPFDIEELLARIRAILRRQPQKDIIDVNGITIDKNAFKVTVNGAEIELTKTEYDLLYLLAENKNHVMQREQILNHVWGYNSEVETNVVDVYIRYLRNKLKPYDRDKMIETVRGVGYVIR.

Residues 3–116 form the Response regulatory domain; the sequence is QILIVEDEQN…ELLARIRAIL (114 aa). At Asp52 the chain carries 4-aspartylphosphate. Residues 122-219 constitute a DNA-binding region (ompR/PhoB-type); it reads KDIIDVNGIT…TVRGVGYVIR (98 aa).

Post-translationally, phosphorylated by ArlS.

It is found in the cytoplasm. Functionally, member of the two-component regulatory system ArlS/ArlR involved in the regulation of adhesion, autolysis, multidrug resistance and virulence. This chain is Response regulator ArlR (arlR), found in Staphylococcus aureus (strain USA300).